The primary structure comprises 530 residues: Calcium uptake protein 3, mitochondrial (530 aa).

The transit peptide at 1-43 (MAALRRLLWPPPRVSPPLCAHQPLLGPWGRPAVTTLGLPGRPF) directs the protein to the mitochondrion. The interval 92-115 (GSPATGRPSKSAATEPEDPPRGRG) is disordered. The region spanning 232 to 267 (KPHAGFRIAFNMFDTDGNEMVDKKEFLVLQEIFRKK) is the EF-hand 1 domain. Residues D245, D247, N249, M251, D253, and E256 each coordinate Ca(2+). Residues 401-436 (VENTSVFLENVRYSIPEEKGITFDEFRSFFQFLNNL) enclose the EF-hand 2; degenerate domain. The EF-hand 3 domain maps to 470 to 505 (FSPHLVNTVFKIFDVDKDDQLSYKEFIGIMKDRLHR). Positions 483, 485, 487, 489, and 494 each coordinate Ca(2+).

The protein belongs to the MICU1 family. MICU3 subfamily. In terms of assembly, heterodimer; disulfide-linked; heterodimerizes with MICU1. Component of the uniplex complex, composed of MCU, EMRE/SMDT1, MICU1 and MICU3 in a 4:4:1:1 stoichiometry. Specifically expressed in the central nervous system and skeletal muscle.

The protein localises to the mitochondrion intermembrane space. It localises to the mitochondrion inner membrane. In terms of biological role, tissue-specific calcium sensor of the mitochondrial calcium uniporter (MCU) channel, which specifically regulates MCU channel activity in the central nervous system and skeletal muscle. Senses calcium level via its EF-hand domains: compared to MICU1 and MICU2, MICU3 has a higher affinity for calcium. MICU1 and MICU3 form a disulfide-linked heterodimer that stimulates and inhibits MCU activity, depending on the concentration of calcium. At low calcium levels, MICU1 occludes the pore of the MCU channel, preventing mitochondrial calcium uptake. At higher calcium levels, calcium-binding to MICU1 and MICU3 induces a conformational change that weakens MCU-MICU1 interactions and moves the MICU1-MICU3 heterodimer away from the pore, allowing calcium permeation through the MCU channel. The high calcium affinity of MICU3 lowers the calcium threshold necessary for calcium permeation through the MCU channel. The MICU1-MICU3 heterodimer promotes flexibility of neurotransmission in neuronal cells by enhancing mitochondrial calcium uptake in presynapses. It is also required to increase mitochondrial calcium uptake in skeletal muscle cells, thereby increasing ATP production. In Homo sapiens (Human), this protein is Calcium uptake protein 3, mitochondrial.